We begin with the raw amino-acid sequence, 410 residues long: D-amino acid dehydrogenase (410 aa).

9–14 (GGGIVG) serves as a coordination point for FAD.

Belongs to the DadA oxidoreductase family. It depends on FAD as a cofactor.

The protein resides in the cell inner membrane. It catalyses the reaction a D-alpha-amino acid + a quinone + H2O = a 2-oxocarboxylate + a quinol + NH4(+). Its function is as follows. Catalyzes the oxidative deamination of D-amino acids. Has broad substrate specificity; is mostly active on D-proline, and to a lesser extent, on several other D-amino acids such as D-alanine, D-phenylalanine and D-serine. Mediates electron transport from D-proline to coenzyme Q1 in vitro, and is involved in the electron transport chain from D-proline to the c-type cytochrome in vivo. The chain is D-amino acid dehydrogenase from Helicobacter pylori (strain ATCC 700392 / 26695) (Campylobacter pylori).